The following is a 217-amino-acid chain: Probable chemoreceptor glutamine deamidase CheD (217 aa).

Residues 194 to 217 form a disordered region; the sequence is ATSGTAPSRGGELFTRASASRTPS.

Belongs to the CheD family.

It carries out the reaction L-glutaminyl-[protein] + H2O = L-glutamyl-[protein] + NH4(+). Functionally, probably deamidates glutamine residues to glutamate on methyl-accepting chemotaxis receptors (MCPs), playing an important role in chemotaxis. In Cupriavidus pinatubonensis (strain JMP 134 / LMG 1197) (Cupriavidus necator (strain JMP 134)), this protein is Probable chemoreceptor glutamine deamidase CheD.